A 259-amino-acid polypeptide reads, in one-letter code: UDP-2,3-diacylglucosamine hydrolase (259 aa).

Residues aspartate 8, histidine 10, aspartate 41, asparagine 79, and histidine 114 each contribute to the Mn(2+) site. Position 79–80 (79–80 (NR)) interacts with substrate. Substrate is bound by residues aspartate 122, serine 160, asparagine 164, lysine 167, and histidine 195. Mn(2+) contacts are provided by histidine 195 and histidine 197.

This sequence belongs to the LpxH family. The cofactor is Mn(2+).

The protein resides in the cell inner membrane. The catalysed reaction is UDP-2-N,3-O-bis[(3R)-3-hydroxytetradecanoyl]-alpha-D-glucosamine + H2O = 2-N,3-O-bis[(3R)-3-hydroxytetradecanoyl]-alpha-D-glucosaminyl 1-phosphate + UMP + 2 H(+). It functions in the pathway glycolipid biosynthesis; lipid IV(A) biosynthesis; lipid IV(A) from (3R)-3-hydroxytetradecanoyl-[acyl-carrier-protein] and UDP-N-acetyl-alpha-D-glucosamine: step 4/6. Its function is as follows. Hydrolyzes the pyrophosphate bond of UDP-2,3-diacylglucosamine to yield 2,3-diacylglucosamine 1-phosphate (lipid X) and UMP by catalyzing the attack of water at the alpha-P atom. Involved in the biosynthesis of lipid A, a phosphorylated glycolipid that anchors the lipopolysaccharide to the outer membrane of the cell. This chain is UDP-2,3-diacylglucosamine hydrolase, found in Edwardsiella ictaluri (strain 93-146).